We begin with the raw amino-acid sequence, 158 residues long: Anti-tumor lectin (158 aa).

Position 1 is a blocked amino end (Gln) (Q1). In terms of domain architecture, Galectin spans 12 to 155; the sequence is TSVDLAAPVT…STVVEAVTYT (144 aa). N-acetyl-alpha-neuraminyl-(2-&gt;3)-beta-D-galactosyl-(1-&gt;4)-beta-D-glucose-binding residues include N43, H59, R63, N72, R74, W80, and E83.

Homodimer. As to expression, detected in the fruiting body.

Anti-tumor lectin with DNase activity. Inhibits the growth of several tumor cell lines in vitro. Induces lymphocyte infiltration and necrosis of tumor cells in a mouse tumor model. Induces apoptosis in HeLa cells. Binds N-acetylneuraminyl lactose (N-acetyl-alpha-neuraminyl-(2-&gt;3)-beta-D-galactosyl-(1-&gt;4)-beta-D-glucose). The polypeptide is Anti-tumor lectin (Cyclocybe aegerita (Black poplar mushroom)).